We begin with the raw amino-acid sequence, 102 residues long: Small ribosomal subunit protein uS10 (102 aa).

This sequence belongs to the universal ribosomal protein uS10 family. As to quaternary structure, part of the 30S ribosomal subunit.

Functionally, involved in the binding of tRNA to the ribosomes. The polypeptide is Small ribosomal subunit protein uS10 (Syntrophus aciditrophicus (strain SB)).